The primary structure comprises 735 residues: Translation initiation factor IF-2, chloroplastic (735 aa).

In terms of domain architecture, tr-type G spans 239-411 (RRAPIVTILG…ILLMADIENY (173 aa)). Positions 248–255 (GHVDHGKT) are G1. 248–255 (GHVDHGKT) contributes to the GTP binding site. The tract at residues 273–277 (GITQK) is G2. The interval 298 to 301 (DTPG) is G3. GTP-binding positions include 298–302 (DTPGH) and 352–355 (NKID). Residues 352–355 (NKID) form a G4 region. Residues 388-390 (SAS) are G5.

The protein belongs to the TRAFAC class translation factor GTPase superfamily. Classic translation factor GTPase family. IF-2 subfamily.

Its subcellular location is the plastid. It is found in the chloroplast. Functionally, one of the essential components for the initiation of protein synthesis. Protects formylmethionyl-tRNA from spontaneous hydrolysis and promotes its binding to the 30S ribosomal subunits. Also involved in the hydrolysis of GTP during the formation of the 70S ribosomal complex. In Guillardia theta (Cryptophyte), this protein is Translation initiation factor IF-2, chloroplastic (infB).